Here is a 255-residue protein sequence, read N- to C-terminus: tRNA pseudouridine synthase A (255 aa).

D43 functions as the Nucleophile in the catalytic mechanism. Y94 provides a ligand contact to substrate.

It belongs to the tRNA pseudouridine synthase TruA family.

It carries out the reaction uridine(38/39/40) in tRNA = pseudouridine(38/39/40) in tRNA. Its function is as follows. Formation of pseudouridine at positions 38, 39 and 40 in the anticodon stem and loop of transfer RNAs. The chain is tRNA pseudouridine synthase A from Pyrobaculum islandicum (strain DSM 4184 / JCM 9189 / GEO3).